Consider the following 257-residue polypeptide: Beta-fibrinogenase mucrofibrase-4 (257 aa).

Residues 1–18 form the signal peptide; it reads MVLIRVLANLLILQLSYA. Positions 19–24 are excised as a propeptide; it reads QKSSEL. One can recognise a Peptidase S1 domain in the interval 25-248; the sequence is VIGGDECNIN…HLDWIKGFIA (224 aa). 6 disulfides stabilise this stretch: Cys-31-Cys-162, Cys-49-Cys-65, Cys-97-Cys-255, Cys-141-Cys-209, Cys-173-Cys-188, and Cys-199-Cys-224. Residues His-64 and Asp-109 each act as charge relay system in the active site. Residue Ser-203 is the Charge relay system of the active site.

Belongs to the peptidase S1 family. Snake venom subfamily. Monomer. Expressed by the venom gland.

Its subcellular location is the secreted. Functionally, snake venom serine protease with fibrinogenolytic activities. Cleaves beta-chain of fibrinogen (FGB) efficiently and shows relatively lower activity on alpha-chain. This chain is Beta-fibrinogenase mucrofibrase-4, found in Protobothrops mucrosquamatus (Taiwan habu).